The sequence spans 936 residues: Protocadherin alpha-5 (936 aa).

The N-terminal stretch at 1-28 (MVYSRRGSLGSRLLLLWLLLAYWKAGSG) is a signal peptide. At 29 to 696 (QLHYSIPEEA…GPEAALVDVN (668 aa)) the chain is on the extracellular side. Cadherin domains are found at residues 33-132 (SIPE…PPRF), 156-241 (ASDL…APEF), 242-349 (DKSI…TPEM), 350-454 (AITT…APAF), 455-564 (AQPQ…APAL), and 580-677 (VPRS…APKA). N-linked (GlcNAc...) asparagine glycosylation occurs at Asn264. The N-linked (GlcNAc...) asparagine glycan is linked to Asn547. Residues 697–717 (VYLIIAICAVSSLLVLTLLLY) form a helical membrane-spanning segment. Residues 718–936 (TALRCSAQPT…GNSTTDNSDQ (219 aa)) lie on the Cytoplasmic side of the membrane. 2 disordered regions span residues 759 to 793 (SGEAPPKTDLMAFSPSLPQGPTSTDNPRQPNPDWR) and 816 to 936 (AGPG…NSDQ). 5 PXXP repeats span residues 773 to 776 (PSLP), 785 to 788 (PRQP), 818 to 821 (PGGP), 873 to 876 (KFII), and 877 to 890 (PGSPAIISIRQEPT). Positions 773-890 (PSLPQGPTST…AIISIRQEPT (118 aa)) are 5 X 4 AA repeats of P-X-X-P. Over residues 774–786 (SLPQGPTSTDNPR) the composition is skewed to polar residues. The segment covering 895–909 (DKSDFITFGKKEETK) has biased composition (basic and acidic residues).

The protein resides in the cell membrane. Potential calcium-dependent cell-adhesion protein. May be involved in the establishment and maintenance of specific neuronal connections in the brain. This chain is Protocadherin alpha-5 (PCDHA5), found in Homo sapiens (Human).